Reading from the N-terminus, the 587-residue chain is MAPIKEFISKFSDFKNNKKLILSSAAIALLLLASIVGIAATTTNQNKNQKITTLSSTSHAILKSVCSSTLYPELCFSAVAATGGKELTSQKEVIEASLNLTTKAVKHNYFAVKKLIAKRKGLTPREVTALHDCLETIDETLDELHVAVEDLHQYPKQKSLRKHADDLKTLISSAITNQGTCLDGFSYDDADRKVRKALLKGQVHVEHMCSNALAMIKNMTETDIANFELRDKSSTFTNNNNRKLKEVTGDLDSDGWPKWLSVGDRRLLQGSTIKADATVADDGSGDFTTVAAAVAAAPEKSNKRFVIHIKAGVYRENVEVTKKKTNIMFLGDGRGKTIITGSRNVVDGSTTFHSATVAAVGERFLARDITFQNTAGPSKHQAVALRVGSDFSAFYQCDMFAYQDTLYVHSNRQFFVKCHITGTVDFIFGNAAAVLQDCDINARRPNSGQKNMVTAQGRSDPNQNTGIVIQNCRIGGTSDLLAVKGTFPTYLGRPWKEYSRTVIMQSDISDVIRPEGWHEWSGSFALDTLTYREYLNRGGGAGTANRVKWKGYKVITSDTEAQPFTAGQFIGGGGWLASTGFPFSLSL.

The signal sequence occupies residues 1-40 (MAPIKEFISKFSDFKNNKKLILSSAAIALLLLASIVGIAA). 2 N-linked (GlcNAc...) asparagine glycosylation sites follow: Asn99 and Asn218. 2 residues coordinate substrate: Thr351 and Gln381. The active-site Proton donor is Asp404. Cys418 and Cys438 are joined by a disulfide. Catalysis depends on Asp425, which acts as the Nucleophile. 2 residues coordinate substrate: Arg493 and Trp495.

This sequence in the N-terminal section; belongs to the PMEI family. The protein in the C-terminal section; belongs to the pectinesterase family. Expressed in flower buds.

The protein localises to the secreted. It localises to the cell wall. It catalyses the reaction [(1-&gt;4)-alpha-D-galacturonosyl methyl ester](n) + n H2O = [(1-&gt;4)-alpha-D-galacturonosyl](n) + n methanol + n H(+). The protein operates within glycan metabolism; pectin degradation; 2-dehydro-3-deoxy-D-gluconate from pectin: step 1/5. Its function is as follows. Acts in the modification of cell walls via demethylesterification of cell wall pectin. The protein is Pectinesterase 2 (PME2) of Arabidopsis thaliana (Mouse-ear cress).